Here is a 117-residue protein sequence, read N- to C-terminus: Large ribosomal subunit protein bL20c (117 aa).

It belongs to the bacterial ribosomal protein bL20 family.

The protein resides in the plastid. Its subcellular location is the chloroplast. Binds directly to 23S ribosomal RNA and is necessary for the in vitro assembly process of the 50S ribosomal subunit. It is not involved in the protein synthesizing functions of that subunit. This Arabis hirsuta (Hairy rock-cress) protein is Large ribosomal subunit protein bL20c.